A 445-amino-acid polypeptide reads, in one-letter code: ATP-dependent protease ATPase subunit HslU (445 aa).

ATP contacts are provided by residues isoleucine 18, 60 to 65, aspartate 258, glutamate 323, and arginine 395; that span reads GVGKTE.

It belongs to the ClpX chaperone family. HslU subfamily. As to quaternary structure, a double ring-shaped homohexamer of HslV is capped on each side by a ring-shaped HslU homohexamer. The assembly of the HslU/HslV complex is dependent on binding of ATP.

The protein localises to the cytoplasm. Its function is as follows. ATPase subunit of a proteasome-like degradation complex; this subunit has chaperone activity. The binding of ATP and its subsequent hydrolysis by HslU are essential for unfolding of protein substrates subsequently hydrolyzed by HslV. HslU recognizes the N-terminal part of its protein substrates and unfolds these before they are guided to HslV for hydrolysis. In Syntrophotalea carbinolica (strain DSM 2380 / NBRC 103641 / GraBd1) (Pelobacter carbinolicus), this protein is ATP-dependent protease ATPase subunit HslU.